Reading from the N-terminus, the 280-residue chain is Shikimate dehydrogenase (NADP(+)) (280 aa).

Shikimate-binding positions include 18–20 and Thr-65; that span reads SRS. Lys-69 acts as the Proton acceptor in catalysis. Residues Asn-90 and Asp-105 each coordinate shikimate. Residues 130–134, 154–159, and Leu-219 contribute to the NADP(+) site; these read GAGGA and NRTLAR. Tyr-221 serves as a coordination point for shikimate. Gly-242 is a binding site for NADP(+).

This sequence belongs to the shikimate dehydrogenase family. Homodimer.

It carries out the reaction shikimate + NADP(+) = 3-dehydroshikimate + NADPH + H(+). The protein operates within metabolic intermediate biosynthesis; chorismate biosynthesis; chorismate from D-erythrose 4-phosphate and phosphoenolpyruvate: step 4/7. Involved in the biosynthesis of the chorismate, which leads to the biosynthesis of aromatic amino acids. Catalyzes the reversible NADPH linked reduction of 3-dehydroshikimate (DHSA) to yield shikimate (SA). This is Shikimate dehydrogenase (NADP(+)) from Mesorhizobium japonicum (strain LMG 29417 / CECT 9101 / MAFF 303099) (Mesorhizobium loti (strain MAFF 303099)).